A 909-amino-acid chain; its full sequence is Protein translocase subunit SecA (909 aa).

Residues Gln-87, 105-109 (GEGKT), and Asp-513 each bind ATP. The disordered stretch occupies residues 834 to 909 (QEEVERMEEQ…KYKQCHGKID (76 aa)). Residues 836–853 (EVERMEEQRRAQAEEAAR) show a composition bias toward basic and acidic residues. Residues 854-863 (RAQAQHAAAQ) are compositionally biased toward low complexity. Residues 874-889 (EGAHQPMVREERKVGR) are compositionally biased toward basic and acidic residues. Positions 893, 895, 904, and 905 each coordinate Zn(2+). The segment covering 899 to 909 (KKYKQCHGKID) has biased composition (basic residues).

The protein belongs to the SecA family. As to quaternary structure, monomer and homodimer. Part of the essential Sec protein translocation apparatus which comprises SecA, SecYEG and auxiliary proteins SecDF-YajC and YidC. Requires Zn(2+) as cofactor.

It is found in the cell inner membrane. The protein localises to the cytoplasm. The enzyme catalyses ATP + H2O + cellular proteinSide 1 = ADP + phosphate + cellular proteinSide 2.. Its function is as follows. Part of the Sec protein translocase complex. Interacts with the SecYEG preprotein conducting channel. Has a central role in coupling the hydrolysis of ATP to the transfer of proteins into and across the cell membrane, serving both as a receptor for the preprotein-SecB complex and as an ATP-driven molecular motor driving the stepwise translocation of polypeptide chains across the membrane. The chain is Protein translocase subunit SecA from Vibrio campbellii (strain ATCC BAA-1116).